The following is a 406-amino-acid chain: LIM/homeobox protein Lhx1 (406 aa).

2 LIM zinc-binding domains span residues 4–54 (CAGC…CKND) and 63–117 (CAGC…CKED). Residues 125 to 136 (AKENSLHSATTG) show a composition bias toward polar residues. Disordered regions lie at residues 125–187 (AKEN…RTTI) and 296–372 (FPQG…SAEV). Low complexity predominate over residues 137–148 (SDPSLSPDSQDP). Positions 151 to 167 (DDAKDSESANVSDKETG) are enriched in basic and acidic residues. The segment at residues 180-239 (RRGPRTTIKAKQLETLKAAFAATPKPTRHIREQLAQETGLNMRVIQVWFQNRRSKERRMK) is a DNA-binding region (homeobox).

The protein localises to the nucleus. Its function is as follows. Transcriptional factor that defines subclasses of motoneurons that segregate into columns in the spinal cord and select distinct axon pathways. Acts in conjunction with ISL-2. The sequence is that of LIM/homeobox protein Lhx1 (LHX1) from Gallus gallus (Chicken).